A 508-amino-acid polypeptide reads, in one-letter code: Tyrosine decarboxylase 4 (508 aa).

Position 318 is an N6-(pyridoxal phosphate)lysine (K318).

Belongs to the group II decarboxylase family. As to quaternary structure, homodimer. Pyridoxal 5'-phosphate serves as cofactor.

It catalyses the reaction L-tyrosine + H(+) = tyramine + CO2. The protein is Tyrosine decarboxylase 4 (TYRDC-4) of Petroselinum crispum (Parsley).